We begin with the raw amino-acid sequence, 629 residues long: tRNA uridine 5-carboxymethylaminomethyl modification enzyme MnmG (629 aa).

Residue 13–18 (GGGHAG) participates in FAD binding. Residue 273-287 (GPRYCPSIEDKIHRF) coordinates NAD(+).

Belongs to the MnmG family. Homodimer. Heterotetramer of two MnmE and two MnmG subunits. FAD serves as cofactor.

The protein resides in the cytoplasm. Functionally, NAD-binding protein involved in the addition of a carboxymethylaminomethyl (cmnm) group at the wobble position (U34) of certain tRNAs, forming tRNA-cmnm(5)s(2)U34. This is tRNA uridine 5-carboxymethylaminomethyl modification enzyme MnmG from Shewanella baltica (strain OS155 / ATCC BAA-1091).